We begin with the raw amino-acid sequence, 735 residues long: NAD(P)H-quinone oxidoreductase subunit 5, chloroplastic (735 aa).

16 consecutive transmembrane segments (helical) span residues 9-29 (WIIP…LLLF), 40-60 (WAFP…DLSI), 89-109 (IDSL…FVLI), 125-145 (FAYM…CNLI), 147-167 (IYIF…FWFT), 184-204 (IGDF…GSFE), 219-239 (NEVH…GAVA), 258-278 (TPIS…FLVA), 280-300 (LLPL…IGII), 327-347 (LGYM…FHLI), 354-374 (ALLF…VGYS), 396-416 (IAFL…CFWS), 425-445 (WLYS…TAFY), 540-560 (LFPM…AIPF), 600-620 (FSVS…KPFY), and 714-734 (FYLL…YFIL).

This sequence belongs to the complex I subunit 5 family. As to quaternary structure, NDH is composed of at least 16 different subunits, 5 of which are encoded in the nucleus.

The protein localises to the plastid. It localises to the chloroplast thylakoid membrane. The enzyme catalyses a plastoquinone + NADH + (n+1) H(+)(in) = a plastoquinol + NAD(+) + n H(+)(out). The catalysed reaction is a plastoquinone + NADPH + (n+1) H(+)(in) = a plastoquinol + NADP(+) + n H(+)(out). In terms of biological role, NDH shuttles electrons from NAD(P)H:plastoquinone, via FMN and iron-sulfur (Fe-S) centers, to quinones in the photosynthetic chain and possibly in a chloroplast respiratory chain. The immediate electron acceptor for the enzyme in this species is believed to be plastoquinone. Couples the redox reaction to proton translocation, and thus conserves the redox energy in a proton gradient. This is NAD(P)H-quinone oxidoreductase subunit 5, chloroplastic (ndhF) from Gossypium hirsutum (Upland cotton).